Consider the following 129-residue polypeptide: Small ribosomal subunit protein uS8 (129 aa).

It belongs to the universal ribosomal protein uS8 family. In terms of assembly, part of the 30S ribosomal subunit.

In terms of biological role, one of the primary rRNA binding proteins, it binds directly to 16S rRNA central domain where it helps coordinate assembly of the platform of the 30S subunit. The sequence is that of Small ribosomal subunit protein uS8 from Archaeoglobus fulgidus (strain ATCC 49558 / DSM 4304 / JCM 9628 / NBRC 100126 / VC-16).